A 273-amino-acid chain; its full sequence is HTH-type transcriptional regulator NimR (273 aa).

Positions 158–258 constitute an HTH araC/xylS-type domain; it reads PKIRTMVEMM…GQTPGRYIAR (101 aa). 2 consecutive DNA-binding regions (H-T-H motif) follow at residues 178–199 and 225–248; these read GQWAGFFAMSERNLARLIVKET and VQKVAHTLGYDSTTAFITMFKKGL.

In terms of biological role, negatively regulates expression of the nimT operon and its own expression. Acts by binding to the nimR-nimT intergenic region. This chain is HTH-type transcriptional regulator NimR, found in Escherichia coli (strain K12).